Reading from the N-terminus, the 435-residue chain is uncharacterized protein (435 aa).

Transmembrane regions (helical) follow at residues 26–46, 61–81, 96–116, 119–139, 150–170, 177–197, 242–262, 281–301, 325–345, 347–367, 385–405, and 407–427; these read LLSG…VAAP, IVFS…GSLL, IWSF…LYLF, LIGL…ALWF, LFDS…AFLV, VAFL…WQYY, VWGL…LLTW, FTAV…GWLV, FGFF…IICI, IGLA…AELA, LFGG…TGSF, and LSFL…VFVL.

The protein belongs to the major facilitator superfamily. Phthalate permease family.

It localises to the cell membrane. This is an uncharacterized protein from Bacillus subtilis (strain 168).